The sequence spans 400 residues: MATLLLLLGVLVVSPDALGSTTAVQTPTSGEPLVSTSEPLSSKMYTTSITSDPKADSTGDQTSALPPSTSINEGSPLWTSIGASTGSPLPEPTTYQEVSIKMSSVPQETPHATSHPAVPITANSLGSHTVTGGTITTNSPETSSRTSGAPVTTAASSLETSRGTSGPPLTMATVSLETSKGTSGPPVTMATDSLETSTGTTGPPVTMTTGSLEPSSGASGPQVSSVKLSTMMSPTTSTNASTVPFRNPDENSRGMLPVAVLVALLAVIVLVALLLLWRRRQKRRTGALVLSRGGKRNGVVDAWAGPAQVPEEGAVTVTVGGSGGDKGSGFPDGEGSSRRPTLTTFFGRRKSRQGSLAMEELKSGSGPSLKGEEEPLVASEDGAVDAPAPDEPEGGDGAAP.

Positions 1–19 (MATLLLLLGVLVVSPDALG) are cleaved as a signal peptide. Topologically, residues 20-253 (STTAVQTPTS…PFRNPDENSR (234 aa)) are extracellular. O-linked (GalNAc...) threonine glycans are attached at residues threonine 21, threonine 22, threonine 26, and threonine 28. Composition is skewed to polar residues over residues 21–51 (TTAV…SITS) and 58–112 (TGDQ…TPHA). A disordered region spans residues 21–224 (TTAVQTPTSG…SSGASGPQVS (204 aa)). O-linked (GalNAc...) serine glycans are attached at residues serine 29 and serine 35. O-linked (GalNAc...) threonine glycosylation is present at threonine 36. O-linked (GalNAc...) serine glycosylation is found at serine 37, serine 41, and serine 42. 2 O-linked (GalNAc...) threonine glycosylation sites follow: threonine 46 and threonine 47. Serine 48 is a glycosylation site (O-linked (GalNAc...) serine). Residues threonine 50, threonine 58, and threonine 69 are each glycosylated (O-linked (GalNAc...) threonine). 2 O-linked (GalNAc...) serine glycosylation sites follow: serine 99 and serine 103. Residues threonine 109 and threonine 113 are each glycosylated (O-linked (GalNAc...) threonine). Serine 114 carries an O-linked (GalNAc...) serine glycan. Polar residues-rich tracts occupy residues 121-164 (TANS…SRGT) and 172-182 (ATVSLETSKGT). O-linked (GalNAc...) threonine glycosylation is found at threonine 136, threonine 137, threonine 173, and threonine 178. Over residues 196-211 (TSTGTTGPPVTMTTGS) the composition is skewed to low complexity. Polar residues predominate over residues 212-224 (LEPSSGASGPQVS). The N-linked (GlcNAc...) asparagine glycan is linked to asparagine 239. A helical membrane pass occupies residues 254–276 (GMLPVAVLVALLAVIVLVALLLL). The Cytoplasmic segment spans residues 277–400 (WRRRQKRRTG…EPEGGDGAAP (124 aa)). Positions 278-308 (RRRQKRRTGALVLSRGGKRNGVVDAWAGPAQ) are required for interaction with EZR, MSN and RDX and for co-localization to microvilli. Residues 282-296 (KRRTGALVLSRGGKR) carry the Nuclear localization signal motif. Serine 291 is modified (phosphoserine). Gly residues predominate over residues 320–332 (GGSGGDKGSGFPD). The tract at residues 320–400 (GGSGGDKGSG…EPEGGDGAAP (81 aa)) is disordered. Serine 336 is modified (phosphoserine). At threonine 341 the chain carries Phosphothreonine. Serine 351 is subject to Phosphoserine. Serine 355 bears the Phosphoserine; by PKC/PRKCQ mark. Phosphoserine occurs at positions 368 and 379.

As to quaternary structure, interacts with SIGLEC1. Monomer. Interacts with CTNNB1. Interacts with RDX (via FERM domain), EZR and MSN. Post-translationally, glycosylated; has a high content of sialic acid and O-linked carbohydrate structures. Phosphorylation at Ser-355 is regulated by chemokines, requires its association with ERM proteins (EZR, RDX and MSN) and is essential for its function in the regulation of T-cell trafficking to lymph nodes. In terms of processing, has a high content of sialic acid and O-linked carbohydrate structures. Post-translationally, cleavage by CTSG releases its extracellular domain and triggers its intramembrane proteolysis by gamma-secretase releasing the CD43 cytoplasmic tail chain (CD43-ct) which translocates to the nucleus. Sumoylated. As to expression, cell surface of thymocytes, T-lymphocytes, neutrophils, plasma cells and myelomas.

It is found in the membrane. The protein localises to the cell projection. Its subcellular location is the microvillus. The protein resides in the uropodium. It localises to the nucleus. It is found in the PML body. Its function is as follows. Predominant cell surface sialoprotein of leukocytes which regulates multiple T-cell functions, including T-cell activation, proliferation, differentiation, trafficking and migration. Positively regulates T-cell trafficking to lymph-nodes via its association with ERM proteins (EZR, RDX and MSN). Negatively regulates Th2 cell differentiation and predisposes the differentiation of T-cells towards a Th1 lineage commitment. Promotes the expression of IFN-gamma by T-cells during T-cell receptor (TCR) activation of naive cells and induces the expression of IFN-gamma by CD4(+) T-cells and to a lesser extent by CD8(+) T-cells. Plays a role in preparing T-cells for cytokine sensing and differentiation into effector cells by inducing the expression of cytokine receptors IFNGR and IL4R, promoting IFNGR and IL4R signaling and by mediating the clustering of IFNGR with TCR. Acts as a major E-selectin ligand responsible for Th17 cell rolling on activated vasculature and recruitment during inflammation. Mediates Th17 cells, but not Th1 cells, adhesion to E-selectin. Acts as a T-cell counter-receptor for SIGLEC1. Functionally, protects cells from apoptotic signals, promoting cell survival. The protein is Leukosialin (SPN) of Homo sapiens (Human).